The primary structure comprises 398 residues: MTQSVCILGVTGSIGRSTLKILGQHPDKYSVFAVSAHSRISELVEICKQFRPKVVVVPEQKIAELKTLFAQQNISDIDVLAGQEGLVDIASHTDVDIVMAAIVGAAGLLPTLAAVKAGKRVLLANKEALVMSGEIMMQAARDHQALLLPVDSEHNAIFQSLPHNYLQADRTGQPQLGVSKILLTASGGPFLNHSLEQLVHVTPQQACKHPNWSMGQKISVDSATLMNKGLELIEACHLFSISEHFVTVVVHPQSIIHSMVQYVDGSTLAQMGNPDMCTPIAHALAWPERLQTNVPALDLFEYSQLNFQAPDTQKFPALNLARQAMRAGGLAPTILNAANEIAVEAFLMERIGFTSIPQVVEHTLEKLENAAAESIECILDKDKVARSVAQQYISSIGG.

Positions 11, 12, 13, 14, and 125 each coordinate NADPH. K126 lines the 1-deoxy-D-xylulose 5-phosphate pocket. An NADPH-binding site is contributed by E127. D151 is a binding site for Mn(2+). The 1-deoxy-D-xylulose 5-phosphate site is built by S152, E153, S186, and H209. Residue E153 participates in Mn(2+) binding. G215 is an NADPH binding site. Residues S222, N227, K228, and E231 each contribute to the 1-deoxy-D-xylulose 5-phosphate site. E231 lines the Mn(2+) pocket.

It belongs to the DXR family. Requires Mg(2+) as cofactor. The cofactor is Mn(2+).

It catalyses the reaction 2-C-methyl-D-erythritol 4-phosphate + NADP(+) = 1-deoxy-D-xylulose 5-phosphate + NADPH + H(+). Its pathway is isoprenoid biosynthesis; isopentenyl diphosphate biosynthesis via DXP pathway; isopentenyl diphosphate from 1-deoxy-D-xylulose 5-phosphate: step 1/6. In terms of biological role, catalyzes the NADPH-dependent rearrangement and reduction of 1-deoxy-D-xylulose-5-phosphate (DXP) to 2-C-methyl-D-erythritol 4-phosphate (MEP). This chain is 1-deoxy-D-xylulose 5-phosphate reductoisomerase, found in Acinetobacter baumannii (strain AB307-0294).